Reading from the N-terminus, the 687-residue chain is Glycine--tRNA ligase beta subunit (687 aa).

This sequence belongs to the class-II aminoacyl-tRNA synthetase family. Tetramer of two alpha and two beta subunits.

It localises to the cytoplasm. It catalyses the reaction tRNA(Gly) + glycine + ATP = glycyl-tRNA(Gly) + AMP + diphosphate. The chain is Glycine--tRNA ligase beta subunit from Neisseria meningitidis serogroup A / serotype 4A (strain DSM 15465 / Z2491).